We begin with the raw amino-acid sequence, 634 residues long: GTP-binding protein 4 (634 aa).

An N-acetylalanine modification is found at Ala-2. Residue Lys-103 is modified to N6-acetyllysine; alternate. A Glycyl lysine isopeptide (Lys-Gly) (interchain with G-Cter in SUMO2); alternate cross-link involves residue Lys-103. Ser-122 is modified (phosphoserine). An OBG-type G domain is found at 169-340 (RTLLLCGYPN…VKTEACDRLL (172 aa)). GTP is bound by residues 175 to 182 (GYPNVGKS), 221 to 225 (DTPGI), and 289 to 292 (NKCD). Lys-332 is covalently cross-linked (Glycyl lysine isopeptide (Lys-Gly) (interchain with G-Cter in SUMO2)). 3 positions are modified to phosphoserine: Ser-468, Ser-470, and Ser-472. The segment at 495 to 517 (ILESKEKNTQGPRMPRTAKKVQR) is disordered. N6-acetyllysine is present on Lys-522. Residues 529-634 (VDMDDKDDAH…KRKAGKKDRR (106 aa)) are disordered. Residue Lys-534 forms a Glycyl lysine isopeptide (Lys-Gly) (interchain with G-Cter in SUMO2) linkage. Basic residues predominate over residues 544 to 554 (RRSRSITRKRK). Ser-558 carries the post-translational modification Phosphoserine. Residues 560 to 572 (PPSSVARSGSCSR) are compositionally biased toward polar residues. The span at 573–585 (TPRDVSGLRDVKM) shows a compositional bias: basic and acidic residues. Positions 586 to 604 (VKKAKTMMKNAQKKMNRLG) are enriched in basic residues. Over residues 605–618 (KKGEADRHVFDMKP) the composition is skewed to basic and acidic residues. Positions 619-634 (KHLLSGKRKAGKKDRR) are enriched in basic residues.

It belongs to the TRAFAC class OBG-HflX-like GTPase superfamily. OBG GTPase family. NOG subfamily. In terms of assembly, associates with pre-60S ribosomal particles. Interacts with MINAS-60 (product of an alternative open reading frame of RBM10).

Its subcellular location is the nucleus. It is found in the nucleolus. Involved in the biogenesis of the 60S ribosomal subunit. Acts as a TP53 repressor, preventing TP53 stabilization and cell cycle arrest. The protein is GTP-binding protein 4 of Homo sapiens (Human).